Consider the following 550-residue polypeptide: Probable methionine--tRNA ligase, cytoplasmic (550 aa).

The 'HIGH' region signature appears at 10–20 (PYVNNQPHLGN). Positions 328–332 (KFSKS) match the 'KMSKS' region motif. Lysine 331 contacts ATP.

This sequence belongs to the class-I aminoacyl-tRNA synthetase family.

It localises to the cytoplasm. The enzyme catalyses tRNA(Met) + L-methionine + ATP = L-methionyl-tRNA(Met) + AMP + diphosphate. In Encephalitozoon cuniculi (strain GB-M1) (Microsporidian parasite), this protein is Probable methionine--tRNA ligase, cytoplasmic.